The primary structure comprises 210 residues: Ribonuclease HII (210 aa).

In terms of domain architecture, RNase H type-2 spans 18–210 (GLIAGVDEVG…FKPVKALLGL (193 aa)). 3 residues coordinate a divalent metal cation: D24, E25, and D116.

It belongs to the RNase HII family. It depends on Mn(2+) as a cofactor. Requires Mg(2+) as cofactor.

The protein localises to the cytoplasm. The catalysed reaction is Endonucleolytic cleavage to 5'-phosphomonoester.. In terms of biological role, endonuclease that specifically degrades the RNA of RNA-DNA hybrids. This Shewanella baltica (strain OS155 / ATCC BAA-1091) protein is Ribonuclease HII.